Reading from the N-terminus, the 204-residue chain is uncharacterized protein (204 aa).

A compositionally biased stretch (polar residues) spans 1–10; sequence MQQAITQQEK. Disordered stretches follow at residues 1-20 and 70-99; these read MQQA…LPNR and DEAR…KNTE. Residues 131–204 form the SPOR domain; that stretch reads VRDSKKFGLQ…TVTDCVVIGM (74 aa).

To E.coli FtsN repeat regions.

This is an uncharacterized protein from Haemophilus influenzae (strain ATCC 51907 / DSM 11121 / KW20 / Rd).